Consider the following 449-residue polypeptide: MSLRFYNTLTRQKEAFTPIDPADVRVYACGPTVYDHLHIGNGRMLIVFDLLFRLLRHVYGKDHVRYVRNITDVDDKINARAAERGVDIRVLTDEMTAIFHEDAAGLGCLPPTVEPRATEHMAEMIAIIQKLIDKGAAYIAEGHVLFDVPAMPDYGALSKRPLDDMIAGARVEVAPYKRGPMDFVLWKPAAPSEPGWESPWGRGRPGWHIECSAMSWRHLGEVFDIHGGGIDLVFPHHENEIAQTRCAFGHSVMAHVWMHNGHLQVEGEKMSKSLGNFVTIHELLNSDSFGGRKWPGAVLRLAMLRTHYRQPIDFTVKALEEAERTLSEWRHAAEGAEPEAPDANFIDALSDDLNTPRAISELHALKAKRPGALLGGLALLGVDLADLGEEERALPRSAFEQIMALIAEREAARQHKNWAESDRLRDKLAAMGVVLKDNKGGATSWELKP.

C29 is a binding site for Zn(2+). The 'HIGH' region signature appears at 31-41 (PTVYDHLHIGN). Residues C211, H236, and E240 each coordinate Zn(2+). The 'KMSKS' region motif lies at 269 to 273 (KMSKS). K272 contributes to the ATP binding site.

This sequence belongs to the class-I aminoacyl-tRNA synthetase family. As to quaternary structure, monomer. The cofactor is Zn(2+).

It localises to the cytoplasm. It carries out the reaction tRNA(Cys) + L-cysteine + ATP = L-cysteinyl-tRNA(Cys) + AMP + diphosphate. The polypeptide is Cysteine--tRNA ligase (Methylocella silvestris (strain DSM 15510 / CIP 108128 / LMG 27833 / NCIMB 13906 / BL2)).